The following is a 232-amino-acid chain: Probable caffeoyl-CoA O-methyltransferase At4g26220 (232 aa).

Residue Lys-7 coordinates substrate. Residues Thr-49, Glu-71, 73–74 (GV), Ser-79, Asp-97, and Ala-126 contribute to the S-adenosyl-L-methionine site. Asp-149 serves as a coordination point for substrate. A divalent metal cation is bound at residue Asp-149. Asp-151 serves as a coordination point for S-adenosyl-L-methionine. Residues Asp-175 and Asn-176 each contribute to the a divalent metal cation site.

It belongs to the class I-like SAM-binding methyltransferase superfamily. Cation-dependent O-methyltransferase family. CCoAMT subfamily. A divalent metal cation serves as cofactor.

It carries out the reaction (E)-caffeoyl-CoA + S-adenosyl-L-methionine = (E)-feruloyl-CoA + S-adenosyl-L-homocysteine + H(+). It functions in the pathway aromatic compound metabolism; phenylpropanoid biosynthesis. Methylates caffeoyl-CoA to feruloyl-CoA and 5-hydroxyferuloyl-CoA to sinapoyl-CoA. Plays a role in the synthesis of feruloylated polysaccharides. Involved in the reinforcement of the plant cell wall. Also involved in the responding to wounding or pathogen challenge by the increased formation of cell wall-bound ferulic acid polymers. The protein is Probable caffeoyl-CoA O-methyltransferase At4g26220 of Arabidopsis thaliana (Mouse-ear cress).